A 202-amino-acid chain; its full sequence is LexA repressor (202 aa).

Residues 28 to 48 (RAEIAQRLGFRSPNAAEEHLK) constitute a DNA-binding region (H-T-H motif). Catalysis depends on for autocatalytic cleavage activity residues Ser119 and Lys156.

Belongs to the peptidase S24 family. In terms of assembly, homodimer.

It catalyses the reaction Hydrolysis of Ala-|-Gly bond in repressor LexA.. Functionally, represses a number of genes involved in the response to DNA damage (SOS response), including recA and lexA. Binds to the 16 bp palindromic sequence 5'-CTGTATATATATACAG-3'. In the presence of single-stranded DNA, RecA interacts with LexA causing an autocatalytic cleavage which disrupts the DNA-binding part of LexA, leading to derepression of the SOS regulon and eventually DNA repair. This Edwardsiella ictaluri (strain 93-146) protein is LexA repressor.